The following is a 440-amino-acid chain: Protein root UVB sensitive 3 (440 aa).

A run of 3 helical transmembrane segments spans residues 109–129, 154–174, and 232–252; these read IGATFQWFLRDFTGMLGGILF, IGMLMDLLSPLFPSAFIVVVC, and FTSGNPMAIWLSFLSLTVFHM.

Belongs to the RUS1 family.

It is found in the membrane. The polypeptide is Protein root UVB sensitive 3 (Arabidopsis thaliana (Mouse-ear cress)).